We begin with the raw amino-acid sequence, 197 residues long: MSLSIDVTSLPSISSSIFKNESSSTTSTLSGKSIGRSEQYISPDAEAFNKYMLSKSLEDIGPSDSASNDPLTSFSIRSNAVKTNADAGVSMDSSTQSRPSSNVGCDQLDFSLTKGVNVSANLDSCISISTDHKKEKSKKDKSRKHYPRIEADSDSEDYVLDDSDSDDGKCKNCKYKKKYFALRMRMKRVAMQLIEDL.

Positions 17 to 30 (IFKNESSSTTSTLS) are enriched in low complexity. Residues 17-36 (IFKNESSSTTSTLSGKSIGR) form a disordered region. The residue at position 67 (serine 67) is a Phosphoserine; by host CK1. Residue aspartate 92 participates in Mg(2+) binding. A disordered region spans residues 131 to 167 (DHKKEKSKKDKSRKHYPRIEADSDSEDYVLDDSDSDD). Positions 152-165 (DSDSEDYVLDDSDS) are enriched in acidic residues. Residues serine 153, serine 155, serine 163, and serine 165 each carry the phosphoserine; by host modification.

The protein belongs to the rotavirus NSP5 family. Homodimer. Interacts with VP1. Interacts with VP2. Interacts with NSP2; this interaction leads to up-regulation of NSP5 hyperphosphorylation and formation of virus factories. Interacts with NSP6. Participates in the selective exclusion of host proteins from stress granules (SG) and P bodies (PB). Also participates in the sequestration of these remodeled organelles in viral factories. Mg(2+) is required as a cofactor. O-glycosylated. Post-translationally, hyperphosphorylated on serine residues, when in dimeric form. Phosphorylation by host CK1 is required for the hyperphosphorylation of NSP5 dimer.

The protein localises to the host cytoplasm. Plays an essential role in the viral genome replication. Participates, together with NSP2, in the formation of viral factories (viroplasms), which are large inclusions in the host cytoplasm where replication intermediates are assembled and viral RNA replication takes place. Orchestrates the recruitment of viroplasmic proteins such as capsid proteins to these factories. Participates in the selective exclusion of host proteins from stress granules (SG) and P bodies (PB). Also participates in the sequestration of these remodeled organelles in viral factories. This chain is Non-structural protein 5, found in Homo sapiens (Human).